Here is a 395-residue protein sequence, read N- to C-terminus: Protein HIGH CHLOROPHYLL FLUORESCENCE PHENOTYPE 244, chloroplastic (395 aa).

Residues 1–64 constitute a chloroplast transit peptide; that stretch reads MASLRLPAQL…ERSIVVPVTC (64 aa).

This sequence belongs to the NmrA-type oxidoreductase family. In terms of assembly, component of a high molecular weight complex containing OHP1, OHP2 and HCF244, and PSII core proteins D1/D2, HCF136 and HCF173. Interacts with OHP1. Forms a trimeric complex with OHP1 and OHP2 that mutually stabilizes each subunit.

The protein resides in the plastid. Its subcellular location is the chloroplast stroma. The protein localises to the chloroplast thylakoid membrane. Its function is as follows. Auxiliary factor required, together with HCF173, for the biogenesis of photosystem II (PSII), especially for the synthesis of the reaction center proteins (e.g. D1), via the regulation of the corresponding mRNA (e.g. psbA) translation initiation (ribosomal loading) and stabilization. Forms a trimeric complex with OHP1 and OHP2 that is required to promote PSII core subunit assembly. The trimeric complex forms a transient PSII reaction center-like complex with PsbA, PsbD, PsbE, PsbF and PsbI subunits in thylakoids for early assembly of PSII as well as PSII repair. The trimeric complex is required for the recruitment of ribosomes to the psbA mRNA during PSII biogenesis and repair. This chain is Protein HIGH CHLOROPHYLL FLUORESCENCE PHENOTYPE 244, chloroplastic, found in Arabidopsis thaliana (Mouse-ear cress).